Here is a 264-residue protein sequence, read N- to C-terminus: Transmembrane protein 41A (264 aa).

An N-terminal signal peptide occupies residues 1 to 17 (MRALLGLLLVFGGCTFA). The next 5 helical transmembrane spans lie at 67-87 (AYVFLLFCSAYLYKQGFAIPG), 100-122 (GPWLGLLLCCVLTSVGATGCYLL), 153-173 (LFFFLLFLRLFPMTPNWFLNL), 175-195 (APILNIPIVQFFFSVLIGLIP), and 219-239 (WETVLKLLAIALVALVPGTLI). The VTT domain stretch occupies residues 96 to 207 (GALFGPWLGL…FICVQTGSIL (112 aa)).

The protein belongs to the TMEM41 family.

It is found in the membrane. This Mus musculus (Mouse) protein is Transmembrane protein 41A (Tmem41a).